Here is a 305-residue protein sequence, read N- to C-terminus: Glycine--tRNA ligase alpha subunit (305 aa).

The protein belongs to the class-II aminoacyl-tRNA synthetase family. As to quaternary structure, tetramer of two alpha and two beta subunits.

It localises to the cytoplasm. It carries out the reaction tRNA(Gly) + glycine + ATP = glycyl-tRNA(Gly) + AMP + diphosphate. The sequence is that of Glycine--tRNA ligase alpha subunit from Streptococcus sanguinis (strain SK36).